A 637-amino-acid chain; its full sequence is Acyl-CoA ligase cm3C (637 aa).

ATP-binding positions include 282-290 (TSGTSGRQK), 423-428 (HAWGLT), aspartate 507, arginine 526, and lysine 624. The segment at 353–423 (DMQRMLGSVA…SLQPSWEFLH (71 aa)) is SBD1. The segment at 424 to 486 (AWGLTETCIV…YKAPNMFVGY (63 aa)) is SBD2.

Belongs to the ATP-dependent AMP-binding enzyme family.

It participates in secondary metabolite biosynthesis. Functionally, acyl-CoA ligase; part of the gene cluster that mediates the biosynthesis of beauveriolides I and III, cyclodepsipeptides acting as inhibitors of the acyl-CoA:cholesterol acyltransferase. The HR-PKS cm3B initiates the biosynthesis of beauveriolides by iteratively catalyzing the formation of the linear polyketide chain. The ATP-dependent acetyl-CoA ligase cm3D converts the polyketide carboxylic acid to a CoA thioester which id shuttled to the first T domain in the NRPS cm3A by the acetyltransferase cm3C. Cm3A contains 13 domains and assembles the polyketide chain, L-phenylalanine, L-alanine, and D-leucine (or D-allo-isoleucine) to form beauveriolide I (or beauveriolide III). The production of both beauveriolides I and III suggests the substrate adaptability of cm3B, using different amino acids as substrates. The sequence is that of Acyl-CoA ligase cm3C from Cordyceps militaris (strain CM01) (Caterpillar fungus).